Reading from the N-terminus, the 327-residue chain is Glycerol-3-phosphate dehydrogenase [NAD(P)+] (327 aa).

Residues Phe13, Arg34, and Lys107 each contribute to the NADPH site. Residues Lys107 and Gly135 each contribute to the sn-glycerol 3-phosphate site. Position 139 (Ala139) interacts with NADPH. The sn-glycerol 3-phosphate site is built by Lys190, Asp243, Ser253, Arg254, and Asn255. The active-site Proton acceptor is the Lys190. An NADPH-binding site is contributed by Arg254. 2 residues coordinate NADPH: Val276 and Glu277.

This sequence belongs to the NAD-dependent glycerol-3-phosphate dehydrogenase family.

Its subcellular location is the cytoplasm. It carries out the reaction sn-glycerol 3-phosphate + NAD(+) = dihydroxyacetone phosphate + NADH + H(+). The catalysed reaction is sn-glycerol 3-phosphate + NADP(+) = dihydroxyacetone phosphate + NADPH + H(+). The protein operates within membrane lipid metabolism; glycerophospholipid metabolism. In terms of biological role, catalyzes the reduction of the glycolytic intermediate dihydroxyacetone phosphate (DHAP) to sn-glycerol 3-phosphate (G3P), the key precursor for phospholipid synthesis. This chain is Glycerol-3-phosphate dehydrogenase [NAD(P)+], found in Rhizobium johnstonii (strain DSM 114642 / LMG 32736 / 3841) (Rhizobium leguminosarum bv. viciae).